The primary structure comprises 313 residues: MLEIEKPKIETEELNDRYGRFVIEPLERGYGITLGNSMRRILLSSLPGAAVTSIKIEGVLHEFSTVPGVVEDVTEIILNIKNLTLKLHGDEEQVLRIEAEGEGVITAKDIIAPPEVEILNPDLVIAHIAEGGRLFMEMTVARGRGYVPAERNKKGEHVIGVIPVDSIFSPVLKVNFQVENTRVGQITDYDKLTLEVWTDGSIRPDEAVSLAARIMVEHLQLFVNLNERATGVEIMVEKEEDAKEKLAEMPIEDLDLSVRSYNCLKRAGINTVGELIQKTEADMMKVRNLGKKSLEEVISKLNSMGLSLRKEEE.

The tract at residues 1-226 (MLEIEKPKIE…EHLQLFVNLN (226 aa)) is alpha N-terminal domain (alpha-NTD). An alpha C-terminal domain (alpha-CTD) region spans residues 243-313 (KEKLAEMPIE…MGLSLRKEEE (71 aa)).

Belongs to the RNA polymerase alpha chain family. Homodimer. The RNAP catalytic core consists of 2 alpha, 1 beta, 1 beta' and 1 omega subunit. When a sigma factor is associated with the core the holoenzyme is formed, which can initiate transcription.

The enzyme catalyses RNA(n) + a ribonucleoside 5'-triphosphate = RNA(n+1) + diphosphate. Its function is as follows. DNA-dependent RNA polymerase catalyzes the transcription of DNA into RNA using the four ribonucleoside triphosphates as substrates. In Carboxydothermus hydrogenoformans (strain ATCC BAA-161 / DSM 6008 / Z-2901), this protein is DNA-directed RNA polymerase subunit alpha.